A 22-amino-acid polypeptide reads, in one-letter code: Mu-conotoxin MIIIA (22 aa).

A Pyrrolidone carboxylic acid modification is found at glutamine 1. 3 cysteine pairs are disulfide-bonded: cysteine 3-cysteine 15, cysteine 4-cysteine 21, and cysteine 10-cysteine 22. A Cysteine amide modification is found at cysteine 22.

Belongs to the conotoxin M superfamily. In terms of tissue distribution, expressed by the venom duct.

It is found in the secreted. Functionally, mu-conotoxins block voltage-gated sodium channels (Nav). This synthetic toxin potently blocks rNav1.3/SCN3A. It also moderately blocks rNav1.1/SCN1A, rNav1.2/SCN2A, rNav1.4/SCN4A, mNav1.6/SCN8A, and Nav1.7/SCN9A. sodium channels. This block is very slowly reversible. The protein is Mu-conotoxin MIIIA of Conus magus (Magical cone).